A 215-amino-acid chain; its full sequence is Cytochrome b6 (215 aa).

Residues 32-52 (IFYCIGGIVFTSFLIQVASGF) traverse the membrane as a helical segment. Cys-35 is a binding site for heme c. Heme b is bound by residues His-86 and His-100. A run of 3 helical transmembrane segments spans residues 90–110 (ASMM…TGGF), 116–136 (LTWV…VTGY), and 186–206 (LHTF…FLMI). His-187 and His-202 together coordinate heme b.

This sequence belongs to the cytochrome b family. PetB subfamily. In terms of assembly, the 4 large subunits of the cytochrome b6-f complex are cytochrome b6, subunit IV (17 kDa polypeptide, PetD), cytochrome f and the Rieske protein, while the 4 small subunits are PetG, PetL, PetM and PetN. The complex functions as a dimer. Heme b is required as a cofactor. It depends on heme c as a cofactor.

It localises to the plastid. The protein localises to the chloroplast thylakoid membrane. Component of the cytochrome b6-f complex, which mediates electron transfer between photosystem II (PSII) and photosystem I (PSI), cyclic electron flow around PSI, and state transitions. In Gracilaria tenuistipitata var. liui (Red alga), this protein is Cytochrome b6.